The following is a 272-amino-acid chain: Putative pyruvate, phosphate dikinase regulatory protein (272 aa).

An ADP-binding site is contributed by G154–S161.

The protein belongs to the pyruvate, phosphate/water dikinase regulatory protein family. PDRP subfamily.

The catalysed reaction is N(tele)-phospho-L-histidyl/L-threonyl-[pyruvate, phosphate dikinase] + ADP = N(tele)-phospho-L-histidyl/O-phospho-L-threonyl-[pyruvate, phosphate dikinase] + AMP + H(+). It carries out the reaction N(tele)-phospho-L-histidyl/O-phospho-L-threonyl-[pyruvate, phosphate dikinase] + phosphate + H(+) = N(tele)-phospho-L-histidyl/L-threonyl-[pyruvate, phosphate dikinase] + diphosphate. In terms of biological role, bifunctional serine/threonine kinase and phosphorylase involved in the regulation of the pyruvate, phosphate dikinase (PPDK) by catalyzing its phosphorylation/dephosphorylation. In Wolbachia pipientis subsp. Culex pipiens (strain wPip), this protein is Putative pyruvate, phosphate dikinase regulatory protein.